Here is a 405-residue protein sequence, read N- to C-terminus: Argininosuccinate synthase (405 aa).

11–19 (AYSGGLDTS) contributes to the ATP binding site. Tyr90 lines the L-citrulline pocket. Gly119 serves as a coordination point for ATP. L-aspartate-binding residues include Thr121, Asn125, and Asp126. Asn125 serves as a coordination point for L-citrulline. L-citrulline-binding residues include Arg129, Ser178, Ser187, Glu263, and Tyr275.

It belongs to the argininosuccinate synthase family. Type 1 subfamily. Homotetramer.

It is found in the cytoplasm. It catalyses the reaction L-citrulline + L-aspartate + ATP = 2-(N(omega)-L-arginino)succinate + AMP + diphosphate + H(+). The protein operates within amino-acid biosynthesis; L-arginine biosynthesis; L-arginine from L-ornithine and carbamoyl phosphate: step 2/3. The protein is Argininosuccinate synthase of Legionella pneumophila subsp. pneumophila (strain Philadelphia 1 / ATCC 33152 / DSM 7513).